The chain runs to 78 residues: Acyl carrier protein (78 aa).

One can recognise a Carrier domain in the interval 2–77 (SEIASRVKAI…DAVSYIEANA (76 aa)). S37 is subject to O-(pantetheine 4'-phosphoryl)serine.

This sequence belongs to the acyl carrier protein (ACP) family. 4'-phosphopantetheine is transferred from CoA to a specific serine of apo-ACP by AcpS. This modification is essential for activity because fatty acids are bound in thioester linkage to the sulfhydryl of the prosthetic group.

It localises to the cytoplasm. It functions in the pathway lipid metabolism; fatty acid biosynthesis. Functionally, carrier of the growing fatty acid chain in fatty acid biosynthesis. The sequence is that of Acyl carrier protein from Phocaeicola vulgatus (strain ATCC 8482 / DSM 1447 / JCM 5826 / CCUG 4940 / NBRC 14291 / NCTC 11154) (Bacteroides vulgatus).